Here is a 197-residue protein sequence, read N- to C-terminus: Lymphotoxin-alpha (197 aa).

An N-terminal signal peptide occupies residues 1-26; that stretch reads MTPPGRLYLPLLLGLLLAPPPPGAQG. A THD domain is found at 55–197; sequence PAAHLVGDPS…SSVFFGAFAL (143 aa). Asparagine 88 is a glycosylation site (N-linked (GlcNAc...) asparagine). Cysteine 112 and cysteine 148 form a disulfide bridge.

This sequence belongs to the tumor necrosis factor family. As to quaternary structure, homotrimer, and heterotrimer of either two LTB and one LTA subunits or (less prevalent) two LTA and one LTB subunits. Interacts with TNFRSF14.

The protein localises to the secreted. It localises to the membrane. Functionally, cytokine that in its homotrimeric form binds to TNFRSF1A/TNFR1, TNFRSF1B/TNFBR and TNFRSF14/HVEM. In its heterotrimeric form with LTB binds to TNFRSF3/LTBR. Lymphotoxin is produced by lymphocytes and is cytotoxic for a wide range of tumor cells in vitro and in vivo. The protein is Lymphotoxin-alpha (LTA) of Oryctolagus cuniculus (Rabbit).